The chain runs to 210 residues: Thymidylate kinase (210 aa).

An ATP-binding site is contributed by 10 to 17; the sequence is GIDGCGKT.

It belongs to the thymidylate kinase family.

It catalyses the reaction dTMP + ATP = dTDP + ADP. Phosphorylation of dTMP to form dTDP in both de novo and salvage pathways of dTTP synthesis. This Prochlorococcus marinus (strain MIT 9515) protein is Thymidylate kinase.